The chain runs to 129 residues: UPF0325 protein Spro_3794 (129 aa).

This sequence belongs to the UPF0325 family.

The polypeptide is UPF0325 protein Spro_3794 (Serratia proteamaculans (strain 568)).